The sequence spans 249 residues: MEGDCLSCMKYLMFVFNFFIFLGGACLLGIGIWVMVDPTGFREIVAANPLLITGAYILLAMGGLLFLLGFLGCCGAVRENKCLLLFFFLFILIIFLAELSAAILAFIFRGNLTREFFTKELTKHYQGSNDTDVFSATWNSVMITFGCCGVNGPEDFKYASVFRLLTLDSDEVPEACCRREPQSRDGVLLSREECLLGRDLFLNKQGCYTVILNAFETYVYLAGALAIGVLAIELFAMIFAMCLFRGIIQ.

At 1 to 13 (MEGDCLSCMKYLM) the chain is on the cytoplasmic side. A helical transmembrane segment spans residues 14–34 (FVFNFFIFLGGACLLGIGIWV). Residues 35-49 (MVDPTGFREIVAANP) are Extracellular-facing. The chain crosses the membrane as a helical span at residues 50 to 70 (LLITGAYILLAMGGLLFLLGF). The Cytoplasmic portion of the chain corresponds to 71-83 (LGCCGAVRENKCL). A helical membrane pass occupies residues 84-104 (LLFFFLFILIIFLAELSAAIL). The Extracellular portion of the chain corresponds to 105-223 (AFIFRGNLTR…AFETYVYLAG (119 aa)). N-linked (GlcNAc...) asparagine glycosylation is found at N111 and N129. The helical transmembrane segment at 224 to 244 (ALAIGVLAIELFAMIFAMCLF) threads the bilayer. Residues 245–249 (RGIIQ) lie on the Cytoplasmic side of the membrane.

The protein belongs to the tetraspanin (TM4SF) family. As to quaternary structure, interacts with ORAI1; this interaction regulates ORAI1 exit from the endoplasmic (ER), and/or Golgi, and trafficking to the cell surface.

The protein resides in the membrane. Functionally, plays a role in the cell surface localization of ORAI1 and may participate in the regulation of Ca(2+) signaling and the VWF release in response to inflammatory stimuli. The chain is Tetraspanin-18 from Bos taurus (Bovine).